The sequence spans 153 residues: Actin-related protein 2/3 complex subunit 5-like protein (153 aa).

Phosphoserine is present on S64.

It belongs to the ARPC5 family. In terms of assembly, may be a component of the Arp2/3 complex in which it may replace ARPC5.

It is found in the cytoplasm. The protein localises to the cytoskeleton. It localises to the cell projection. Functionally, may function as component of the Arp2/3 complex which is involved in regulation of actin polymerization and together with an activating nucleation-promoting factor (NPF) mediates the formation of branched actin networks. In Bos taurus (Bovine), this protein is Actin-related protein 2/3 complex subunit 5-like protein (ARPC5L).